The primary structure comprises 266 residues: Non-structural maintenance of chromosomes element 1 homolog (266 aa).

The interval 1–102 (MQGSTRRMGV…SISKMATDFA (102 aa)) is interaction with NSMCE3. The RING-type; atypical zinc-finger motif lies at 191–232 (CNICHSLLIQGQSCETCGIRMHLPCVAKYFQSNAEPRCPHCN). The disordered stretch occupies residues 246 to 266 (EKERESGVLKSNKKSLRSRQH). At Ser251 the chain carries Phosphoserine. Basic residues predominate over residues 256–266 (SNKKSLRSRQH).

Belongs to the NSE1 family. In terms of assembly, component of the SMC5-SMC6 complex which consists at least of SMC5, SMC6, NSMCE2, NSMCE1, NSMCE4A or EID3 and NSMCE3. NSMCE1, NSMCE4A or EID3 and NSMCE3 probably form a subcomplex that bridges the head domains of the SMC5-SMC6 heterodimer. Interacts with NSMCE3. Interacts with MAGEF1. Post-translationally, ubiquitinated.

The protein localises to the nucleus. Its subcellular location is the chromosome. The protein resides in the telomere. It carries out the reaction S-ubiquitinyl-[E2 ubiquitin-conjugating enzyme]-L-cysteine + [acceptor protein]-L-lysine = [E2 ubiquitin-conjugating enzyme]-L-cysteine + N(6)-ubiquitinyl-[acceptor protein]-L-lysine.. Its function is as follows. RING-type zinc finger-containing E3 ubiquitin ligase that assembles with melanoma antigen protein (MAGE) to catalyze the direct transfer of ubiquitin from E2 ubiquitin-conjugating enzyme to a specific substrate. Within MAGE-RING ubiquitin ligase complex, MAGE stimulates and specifies ubiquitin ligase activity likely through recruitment and/or stabilization of the E2 ubiquitin-conjugating enzyme at the E3:substrate complex. Involved in maintenance of genome integrity, DNA damage response and DNA repair. NSMCE3/MAGEG1 and NSMCE1 ubiquitin ligase are components of SMC5-SMC6 complex and may positively regulate homologous recombination-mediated DNA repair. MAGEF1-NSMCE1 ubiquitin ligase promotes proteasomal degradation of MMS19, a key component of the cytosolic iron-sulfur protein assembly (CIA) machinery. Down-regulation of MMS19 impairs the activity of several DNA repair and metabolism enzymes such as ERCC2/XPD, FANCJ, RTEL1 and POLD1 that require iron-sulfur clusters as cofactors. The protein is Non-structural maintenance of chromosomes element 1 homolog of Homo sapiens (Human).